A 993-amino-acid polypeptide reads, in one-letter code: Replication protein 1a (993 aa).

The segment at 51-409 is methyltransferase; the sequence is NVLGVKDSEV…TIVINGMSMQ (359 aa). The 219-residue stretch at 72-290 folds into the Alphavirus-like MT domain; sequence HLTQQEFAPH…HDWENIKSFL (219 aa). The segment at 538–561 is disordered; that stretch reads AQPVSEVSDSPETSSQTPDDTADV. Positions 542 to 556 are enriched in polar residues; it reads SEVSDSPETSSQTPD. Residues 687-838 form the (+)RNA virus helicase ATP-binding domain; sequence CVICNSESLS…KIIPDETSDA (152 aa). Positions 712–975 are ATP-dependent helicase; it reads VDGVAGCGKT…LTRHKVTFRY (264 aa). Residue 714–721 coordinates ATP; the sequence is GVAGCGKT. The (+)RNA virus helicase C-terminal domain maps to 839–993; that stretch reads DTTFRSPQDV…DLIAECVARA (155 aa).

Belongs to the bromoviridae replication protein 1a family. Interacts with RNA-directed RNA polymerase 2a.

It localises to the host endoplasmic reticulum membrane. Functionally, involved in the virus replication. Contains a helicase domain and a methyltransferase domain. The methyltransferase domain is probably involved in viral RNA capping. Involved in the formation of ER membrane spherular invaginations in which RNA replication complexes form. This chain is Replication protein 1a, found in Cucumber mosaic virus (strain FNY) (CMV).